Reading from the N-terminus, the 299-residue chain is MSYPQARIGVIGGSGLYQMADLADTVEVQFNTPFGPPSDALVIGTLAGERVAFLPRHGRGHRLLPAELPFQANIYAMKMLGVEYLLSASAVGSLREEYRPRDIVFPDQFFDRTKDRPSTFFGGGLVAHIGFDQPICTELAHLAAEAARGVELIGETRIHTGGTYVCMEGPAFSTLAESRLYRSWGMDIIGMTNLQEAKLAREAEICYATMALVTDYDCWHPDHGAVTVELIIDNLHKNAENAQRIVRAVVERLHAAAPPCASHSALKYALLTQPEDVPQATKQKLAAILAKYPAYRPEV.

Phosphate contacts are provided by residues Ser-14, 56–57 (RH), and 89–90 (SA). Met-191 is a substrate binding site. Thr-192 provides a ligand contact to phosphate. Substrate is bound at residue 215–217 (DYD).

This sequence belongs to the PNP/MTAP phosphorylase family. MTAP subfamily. Homohexamer. Dimer of a homotrimer.

The enzyme catalyses S-methyl-5'-thioadenosine + phosphate = 5-(methylsulfanyl)-alpha-D-ribose 1-phosphate + adenine. It participates in amino-acid biosynthesis; L-methionine biosynthesis via salvage pathway; S-methyl-5-thio-alpha-D-ribose 1-phosphate from S-methyl-5'-thioadenosine (phosphorylase route): step 1/1. Its function is as follows. Catalyzes the reversible phosphorylation of S-methyl-5'-thioadenosine (MTA) to adenine and 5-methylthioribose-1-phosphate. Involved in the breakdown of MTA, a major by-product of polyamine biosynthesis. Responsible for the first step in the methionine salvage pathway after MTA has been generated from S-adenosylmethionine. Has broad substrate specificity with 6-aminopurine nucleosides as preferred substrates. In Gloeobacter violaceus (strain ATCC 29082 / PCC 7421), this protein is S-methyl-5'-thioadenosine phosphorylase.